Reading from the N-terminus, the 127-residue chain is Large ribosomal subunit protein bL17 (127 aa).

This sequence belongs to the bacterial ribosomal protein bL17 family. As to quaternary structure, part of the 50S ribosomal subunit. Contacts protein L32.

The sequence is that of Large ribosomal subunit protein bL17 from Xanthomonas oryzae pv. oryzae (strain KACC10331 / KXO85).